A 241-amino-acid polypeptide reads, in one-letter code: Dihydropteridine reductase (241 aa).

11-35 contributes to the NADP(+) binding site; it reads LVYGGRGALGSRCVQAFRARNWWVA. Residues K70, K76, K93, and K99 each carry the N6-succinyllysine modification. Y147 (proton acceptor) is an active-site residue. S170 is subject to Phosphoserine.

The protein belongs to the short-chain dehydrogenases/reductases (SDR) family. As to quaternary structure, homodimer.

It carries out the reaction 5,6,7,8-tetrahydropteridine + NAD(+) = 6,7-dihydropteridine + NADH + H(+). The enzyme catalyses 5,6,7,8-tetrahydropteridine + NADP(+) = 6,7-dihydropteridine + NADPH + H(+). Its function is as follows. Catalyzes the conversion of quinonoid dihydrobiopterin into tetrahydrobiopterin. In Rattus norvegicus (Rat), this protein is Dihydropteridine reductase (Qdpr).